We begin with the raw amino-acid sequence, 124 residues long: UPF0344 protein BH2983 (124 aa).

A run of 4 helical transmembrane segments spans residues 15 to 35 (GSWA…KAGK), 40 to 60 (KILH…GAGM), 61 to 81 (LVYW…IVLI), and 102 to 122 (IYWI…YNVI).

This sequence belongs to the UPF0344 family.

The protein localises to the cell membrane. The protein is UPF0344 protein BH2983 of Halalkalibacterium halodurans (strain ATCC BAA-125 / DSM 18197 / FERM 7344 / JCM 9153 / C-125) (Bacillus halodurans).